Consider the following 267-residue polypeptide: Undecaprenyl-diphosphatase (267 aa).

A run of 8 helical transmembrane segments spans residues 1–21, 39–59, 83–103, 111–131, 144–164, 189–209, 218–238, and 246–266; these read MSYF…FLPI, QGLA…VIYF, AKLA…GLVM, LRSA…LWWV, AGWK…IPGT, FLMS…KLVT, FLLT…HLFL, and MTPF…YLLM.

It belongs to the UppP family.

Its subcellular location is the cell inner membrane. The catalysed reaction is di-trans,octa-cis-undecaprenyl diphosphate + H2O = di-trans,octa-cis-undecaprenyl phosphate + phosphate + H(+). Functionally, catalyzes the dephosphorylation of undecaprenyl diphosphate (UPP). Confers resistance to bacitracin. The protein is Undecaprenyl-diphosphatase of Vibrio vulnificus (strain CMCP6).